The primary structure comprises 253 residues: 3-deoxy-manno-octulosonate cytidylyltransferase (253 aa).

It belongs to the KdsB family.

It localises to the cytoplasm. The enzyme catalyses 3-deoxy-alpha-D-manno-oct-2-ulosonate + CTP = CMP-3-deoxy-beta-D-manno-octulosonate + diphosphate. Its pathway is nucleotide-sugar biosynthesis; CMP-3-deoxy-D-manno-octulosonate biosynthesis; CMP-3-deoxy-D-manno-octulosonate from 3-deoxy-D-manno-octulosonate and CTP: step 1/1. The protein operates within bacterial outer membrane biogenesis; lipopolysaccharide biosynthesis. Its function is as follows. Activates KDO (a required 8-carbon sugar) for incorporation into bacterial lipopolysaccharide in Gram-negative bacteria. The chain is 3-deoxy-manno-octulosonate cytidylyltransferase from Acidithiobacillus ferrooxidans (strain ATCC 23270 / DSM 14882 / CIP 104768 / NCIMB 8455) (Ferrobacillus ferrooxidans (strain ATCC 23270)).